The chain runs to 3419 residues: Genome polyprotein (3419 aa).

The tract at residues 1 to 25 (MKNPKEEIRRIRIVNMLKRGVARVN) is disordered. Residues 1-104 (MKNPKEEIRR…INARKERKRR (104 aa)) lie on the Cytoplasmic side of the membrane. The segment at 37–72 (LLLGHGPIRMVLAILAFLRFTAIKPSLGLINRWGSV) is hydrophobic; homodimerization of capsid protein C. The propeptide at 105-122 (GADTSIGIIGLLLTTAMA) is ER anchor for capsid protein C, removed in mature form by serine protease NS3. Residues 105 to 125 (GADTSIGIIGLLLTTAMAAEI) form a helical membrane-spanning segment. Topologically, residues 126–249 (TRRGSAYYMY…YTKHLIKVEN (124 aa)) are extracellular. N-linked (GlcNAc...) asparagine; by host glycosylation is present at Asn-192. The helical transmembrane segment at 250 to 269 (WIFRNPGFALVAVAIAWLLG) threads the bilayer. Residues 270-274 (SSTSQ) are Cytoplasmic-facing. Residues 275-290 (KVIYLVMILLIAPAYS) traverse the membrane as a helical segment. Residues 291–741 (IRCIGVSNRD…HQIFGAAFKS (451 aa)) lie on the Extracellular side of the membrane. Residues Cys-293 and Cys-320 are joined by a disulfide bond. Lys-328 participates in a covalent cross-link: Glycyl lysine isopeptide (Lys-Gly) (interchain with G-Cter in ubiquitin). Disulfide bonds link Cys-350–Cys-406, Cys-350–Cys-411, Cys-364–Cys-395, Cys-382–Cys-406, Cys-382–Cys-411, Cys-476–Cys-577, and Cys-594–Cys-625. Positions 388 to 401 (DRGWGNGCGLFGKG) are fusion peptide. A Glycyl lysine isopeptide (Lys-Gly) (interchain with G-Cter in ubiquitin) cross-link involves residue Lys-567. Residues 742 to 763 (LFGGMSWFSQILIGTLLVWLGL) form a helical membrane-spanning segment. The Cytoplasmic segment spans residues 764–769 (NTKNGS). The chain crosses the membrane as a helical span at residues 770-790 (ISLTCLALGGVMIFLSTAVSA). Residues 791-1173 (DVGCSVDFSK…EGLKKRMTTK (383 aa)) are Lumenal-facing. Cystine bridges form between Cys-794–Cys-805, Cys-845–Cys-933, Cys-969–Cys-1013, Cys-1070–Cys-1119, Cys-1081–Cys-1102, and Cys-1103–Cys-1106. N-linked (GlcNAc...) asparagine; by host glycans are attached at residues Asn-920 and Asn-997. A helical membrane pass occupies residues 1174-1194 (IIMSTSMAVLVVMILGGFSMS). The Cytoplasmic segment spans residues 1195 to 1216 (DLAKLVILMGATFAEMNTGGDV). A helical membrane pass occupies residues 1217–1237 (AHLALVAAFKVRPALLVSFIF). Residues 1238 to 1266 (RANWTPRESMLLALASCLLQTAISALEGD) lie on the Lumenal side of the membrane. The helical transmembrane segment at 1267 to 1287 (LMVLINGFALAWLAIRAMAVP) threads the bilayer. Over 1288-1291 (RTDN) the chain is Cytoplasmic. The helical transmembrane segment at 1292 to 1312 (IALPILAALTPLARGTLLVAW) threads the bilayer. The Lumenal portion of the chain corresponds to 1313–1341 (RAGLATCGGIMLLSLKGKGSVKKNLPFVM). A helical transmembrane segment spans residues 1342 to 1362 (ALGLTAVRVVDPINVVGLLLL). At 1363-1369 (TRSGKRS) the chain is on the cytoplasmic side. Residues 1370 to 1390 (WPPSEVLTAVGLICALAGGFA) traverse the membrane as a helical segment. The Lumenal segment spans residues 1391–1393 (KAD). A helical transmembrane segment spans residues 1394–1414 (IEMAGPMAAVGLLIVSYVVSG). The Cytoplasmic portion of the chain corresponds to 1415-1468 (KSVDMYIERAGDITWEKDAEVTGNSPRLDVALDESGDFSLVEEDGPPMREIILK). Residues 1421-1460 (IERAGDITWEKDAEVTGNSPRLDVALDESGDFSLVEEDGP) are interacts with and activates NS3 protease. Residues 1425–1447 (GDITWEKDAEVTGNSPRLDVALD) form a disordered region. The segment at residues 1469 to 1489 (VVLMAICGMNPIAIPFAAGAW) is an intramembrane region (helical). The Lumenal portion of the chain corresponds to 1490–2166 (YVYVKTGKRS…KAAAAQLPET (677 aa)). Residues 1499–1676 (SGALWDVPAP…KREEETPVEC (178 aa)) enclose the Peptidase S7 domain. Active-site charge relay system; for serine protease NS3 activity residues include His-1549, Asp-1573, and Ser-1633. The Helicase ATP-binding domain occupies 1679–1835 (PSMLKKKQLT…DSNSPIMDTE (157 aa)). Residues 1683–1686 (KKKQ) form an important for RNA-binding region. 1692-1699 (LHPGAGKT) lines the ATP pocket. A DEAH box motif is present at residues 1783–1786 (DEAH). Positions 1830–2009 (PIMDTEVEVP…GLIASLYRPE (180 aa)) constitute a Helicase C-terminal domain. The residue at position 1887 (Lys-1887) is an N6-acetyllysine; by host. Residues 2167 to 2187 (LETIMLLGLLGTVSLGIFFVL) traverse the membrane as a helical segment. The Lumenal segment spans residues 2188–2191 (MRNK). An intramembrane region (helical) is located at residues 2192-2212 (GIGKMGFGMVTLGASAWLMWL). The Cytoplasmic segment spans residues 2213–2214 (SE). A helical membrane pass occupies residues 2215-2235 (IEPARIACVLIVVFLLLVVLI). The Lumenal portion of the chain corresponds to 2236-2250 (PEPEKQRSPQDNQMA). Positions 2251–2265 (IIIMVAVGLLGLITA) form an intramembrane region, helical. The Lumenal segment spans residues 2266–2303 (NELGWLERTKNDIAHLMGRREEGATMGFSMDIDLRPAS). An intramembrane region (helical) is located at residues 2304-2324 (AWAIYAALTTLITPAVQHAVT). Residues 2325-2340 (TSYNNYSLMAMATQAG) lie on the Lumenal side of the membrane. A helical membrane pass occupies residues 2341–2361 (VLFGMGKGMPFMHGDLGVPLL). Residues 2362–2371 (MMGCYSQLTP) lie on the Cytoplasmic side of the membrane. Residues 2372 to 2392 (LTLIVAIILLVAHYMYLIPGL) traverse the membrane as a helical segment. Topologically, residues 2393–2437 (QAAAARAAQKRTAAGIMKNPVVDGIVVTDIDTMTIDPQVEKKMGQ) are lumenal. A helical transmembrane segment spans residues 2438 to 2458 (VLLIAVAISSAVLLRTAWGWG). Over 2459–3419 (EAGALITAAT…GEEGSTPGVL (961 aa)) the chain is Cytoplasmic. The mRNA cap 0-1 NS5-type MT domain maps to 2517 to 2781 (GGGTGETLGE…DVNLGSGTRA (265 aa)). Lys-2529, Leu-2532, Asn-2533, Met-2535, Phe-2540, and Lys-2544 together coordinate mRNA. Residue 2529–2535 (KARLNQM) coordinates GTP. S-adenosyl-L-methionine is bound at residue Ser-2572. At Ser-2572 the chain carries Phosphoserine. The For 2'-O-MTase activity role is filled by Lys-2577. Positions 2593–2596 (VVDL) are SUMO-interacting motif (SIM). Residues Gly-2602, Trp-2603, Thr-2620, Lys-2621, His-2626, Glu-2627, Asp-2647, Val-2648, Asp-2662, and Ile-2663 each contribute to the S-adenosyl-L-methionine site. Residue Asp-2662 is the For 2'-O-MTase activity of the active site. GTP is bound at residue 2665–2671 (ESSSSPE). Residue Ser-2666 participates in mRNA binding. Lys-2698 acts as the For 2'-O-MTase activity in catalysis. Positions 2729 and 2731 each coordinate mRNA. 2729 to 2731 (RNS) contacts GTP. Glu-2734 (for 2'-O-MTase activity) is an active-site residue. Tyr-2736 is a binding site for S-adenosyl-L-methionine. Residues 2904 to 2910 (KRKRPRV) carry the Nuclear localization signal (NLS) motif. Zn(2+)-binding residues include Glu-2955, His-2959, Cys-2964, and Cys-2967. Residues 3045–3195 (GKMYADDTAG…KPIDDRFAHA (151 aa)) enclose the RdRp catalytic domain. Zn(2+) contacts are provided by His-3230, Cys-3246, and Cys-3365.

The protein in the N-terminal section; belongs to the class I-like SAM-binding methyltransferase superfamily. mRNA cap 0-1 NS5-type methyltransferase family. Homodimer. Interacts with host SERTAD3; this interaction promotes capsid protein C degradation. Interacts with host CAPRIN1; this interaction is probably linked to the inhibition of stress granules formation by the virus. Interacts with host G3BP1; this interaction is probably linked to the inhibition of stress granules formation by the virus. In terms of assembly, forms heterodimers with envelope protein E in the endoplasmic reticulum and Golgi. Interacts with non-structural protein 2A. As to quaternary structure, homodimer; in the endoplasmic reticulum and Golgi. Interacts with host TYRO3, AXL and DC-SIGN proteins. Interacts with non-structural protein 2A. Interacts with host HAVCR1; this interaction likely mediates virus attachment to host cell. Interacts with host NCAM1. Interacts with host HSPA5. Interacts with Aedes aegypti SRPN25, APY and venom allergen-1 salivary proteins; the interactions do not affect Zika virus replication in human endothelial cells and keratinocytes. Homodimer; Homohexamer when secreted. Interacts with host TBK1. Interacts with host USP8. Interacts with envelope protein E. Interacts with host HSPA5. In terms of assembly, interacts with the structural protein prM/E complex, and the NS2B/NS3 protease complex. As to quaternary structure, forms a heterodimer with serine protease NS3. May form homooligomers. Interacts with human SPCS1. Interacts with non-structural protein 2A. Forms a heterodimer with NS2B. Interacts with NS4B. Interacts with unphosphorylated RNA-directed RNA polymerase NS5; this interaction stimulates RNA-directed RNA polymerase NS5 guanylyltransferase activity. Interacts with non-structural protein 2A. Interacts with host SHFL; this interaction promotes NS3 degradation via a lysosome-dependent pathway. Interacts with host CEP63; this interaction disorganizes the centrosome and inhibits host innate immune response. In terms of assembly, may interact with host ANKLE2; the interaction may cause defects in brain development, such as microcephaly. May interact with host SRPRA and SEC61G. As to quaternary structure, interacts with serine protease NS3. Interacts with NS1. Interacts with host TBK1. Homodimer. Interacts with host STAT2; this interaction inhibits the phosphorylation of the latter, and, when all viral proteins are present (polyprotein), targets STAT2 for degradation. Interacts with host TBK1 and IKBKE; these interactions lead to the inhibition of the host RIG-I signaling pathway. Interacts with host KPNA2. Interacts with host PAF1 complex; the interaction may prevent the recruitment of the host PAF1 complex to interferon-responsive genes, and thus reduces the immune response. Interacts with serine protease NS3. Interacts with host ZSWIM8; this interaction allows STAT2 binding to ZSWIM8 and subsequent proteasomal degradation leading to inhibition of interferon signaling. In terms of processing, specific enzymatic cleavages in vivo yield mature proteins. Cleavages in the lumen of endoplasmic reticulum are performed by host signal peptidase, whereas cleavages in the cytoplasmic side are performed by serine protease NS3. Signal cleavage at the 2K-4B site requires a prior NS3 protease-mediated cleavage at the 4A-2K site. Cleaved in post-Golgi vesicles by a host furin, releasing the mature small envelope protein M, and peptide pr. This cleavage is incomplete as up to 30% of viral particles still carry uncleaved prM. Post-translationally, N-glycosylation plays a role in virulence in mammalian and mosquito hosts, but may have no effect on neurovirulence. In terms of processing, ubiquitination by host TRIM7 promotes virus attachment and fusion of the virus and the host endosome membrane. N-glycosylated. The excreted form is glycosylated, which is required for efficient secretion of the protein from infected cells. Post-translationally, acetylated by host KAT5. Acetylation modulates NS3 RNA-binding and unwinding activities and plays an important positive role for viral replication. In terms of processing, phosphorylated on serines residues. This phosphorylation may trigger NS5 nuclear localization. Sumoylated, required for regulating IFN induced interferon stimulated genes/ISGs.

Its subcellular location is the virion. It is found in the host nucleus. The protein resides in the host cytoplasm. The protein localises to the host perinuclear region. It localises to the secreted. Its subcellular location is the virion membrane. It is found in the host endoplasmic reticulum membrane. It catalyses the reaction Selective hydrolysis of -Xaa-Xaa-|-Yaa- bonds in which each of the Xaa can be either Arg or Lys and Yaa can be either Ser or Ala.. The enzyme catalyses RNA(n) + a ribonucleoside 5'-triphosphate = RNA(n+1) + diphosphate. It carries out the reaction a ribonucleoside 5'-triphosphate + H2O = a ribonucleoside 5'-diphosphate + phosphate + H(+). The catalysed reaction is ATP + H2O = ADP + phosphate + H(+). It catalyses the reaction a 5'-end (5'-triphosphoguanosine)-ribonucleoside in mRNA + S-adenosyl-L-methionine = a 5'-end (N(7)-methyl 5'-triphosphoguanosine)-ribonucleoside in mRNA + S-adenosyl-L-homocysteine. The enzyme catalyses a 5'-end (N(7)-methyl 5'-triphosphoguanosine)-ribonucleoside in mRNA + S-adenosyl-L-methionine = a 5'-end (N(7)-methyl 5'-triphosphoguanosine)-(2'-O-methyl-ribonucleoside) in mRNA + S-adenosyl-L-homocysteine + H(+). Plays a role in virus budding by binding to the host cell membrane and packages the viral RNA into a nucleocapsid that forms the core of the mature virus particle. During virus entry, may induce genome penetration into the host cytoplasm after hemifusion induced by the surface proteins. Can migrate to the cell nucleus where it modulates host functions. Inhibits the integrated stress response (ISR) in the infected cell. Functionally, inhibits RNA silencing by interfering with host Dicer. Its function is as follows. Prevents premature fusion activity of envelope proteins in trans-Golgi by binding to envelope protein E at pH 6.0. After virion release in extracellular space, gets dissociated from E dimers. In terms of biological role, plays a role in host immune defense modulation and protection of envelope protein E during virion synthesis. PrM-E cleavage is inefficient, many virions are only partially matured and immature prM-E proteins could play a role in immune evasion. Contributes to fetal microcephaly in humans. Acts as a chaperone for envelope protein E during intracellular virion assembly by masking and inactivating envelope protein E fusion peptide. prM is the only viral peptide matured by host furin in the trans-Golgi network probably to avoid catastrophic activation of the viral fusion activity in acidic Golgi compartment prior to virion release. May play a role in virus budding. Exerts cytotoxic effects by activating a mitochondrial apoptotic pathway through M ectodomain. May display a viroporin activity. Functionally, binds to host cell surface receptors and mediates fusion between viral and cellular membranes. Efficient virus attachment to cell is, at least in part, mediated by host HAVCR1 in a cell-type specific manner. In addition, host NCAM1 can also be used as entry receptor. Interaction with host HSPA5 plays an important role in the early stages of infection as well. Envelope protein is synthesized in the endoplasmic reticulum and forms a heterodimer with protein prM. The heterodimer plays a role in virion budding in the ER, and the newly formed immature particle is covered with 60 spikes composed of heterodimers between precursor prM and envelope protein E. The virion is transported to the Golgi apparatus where the low pH causes the dissociation of PrM-E heterodimers and formation of E homodimers. PrM-E cleavage is inefficient, many virions are only partially matured and immature prM-E proteins could play a role in immune evasion. Its function is as follows. Plays a role in the inhibition of host RLR-induced interferon-beta activation by targeting TANK-binding kinase 1/TBK1. In addition, recruits the host deubiquitinase USP8 to cleave 'Lys-11'-linked polyubiquitin chains from caspase-1/CASP1 thus inhibiting its proteasomal degradation. In turn, stabilized CASP1 promotes cleavage of cGAS, which inhibits its ability to recognize mitochondrial DNA release and initiate type I interferon signaling. In terms of biological role, component of the viral RNA replication complex that recruits genomic RNA, the structural protein prM/E complex, and the NS2B/NS3 protease complex to the virion assembly site and orchestrates virus morphogenesis. Antagonizes also the host MDA5-mediated induction of alpha/beta interferon antiviral response. May disrupt adherens junction formation and thereby impair proliferation of radial cells in the host cortex. Required cofactor for the serine protease function of NS3. Functionally, displays three enzymatic activities: serine protease, NTPase and RNA helicase. NS3 serine protease, in association with NS2B, performs its autocleavage and cleaves the polyprotein at dibasic sites in the cytoplasm: C-prM, NS2A-NS2B, NS2B-NS3, NS3-NS4A, NS4A-2K and NS4B-NS5. NS3 RNA helicase binds RNA and unwinds dsRNA in the 3' to 5' direction. Leads to translation arrest when expressed ex vivo. Disrupts host centrosome organization in a CEP63-dependent manner to degrade host TBK1 and inhibits innate immune response. Inhibits the integrated stress response (ISR) in the infected cell. Its function is as follows. Regulates the ATPase activity of the NS3 helicase activity. NS4A allows NS3 helicase to conserve energy during unwinding. Cooperatively with NS4B suppresses the Akt-mTOR pathway and leads to cellular dysregulation. By inhibiting host ANKLE2 functions, may cause defects in brain development, such as microcephaly. Also antagonizes the host MDA5-mediated induction of alpha/beta interferon antiviral response. Inhibits the integrated stress response (ISR) in the infected cell. In terms of biological role, functions as a signal peptide for NS4B and is required for the interferon antagonism activity of the latter. Induces the formation of ER-derived membrane vesicles where the viral replication takes place. Also plays a role in the inhibition of host RLR-induced interferon-beta production at TANK-binding kinase 1/TBK1 level. Cooperatively with NS4A suppresses the Akt-mTOR pathway and leads to cellular dysregulation. Functionally, replicates the viral (+) and (-) RNA genome, and performs the capping of genomes in the cytoplasm. Methylates viral RNA cap at guanine N-7 and ribose 2'-O positions. Once sufficient NS5 is expressed, binds to the cap-proximal structure and inhibits further translation of the viral genome. Besides its role in RNA genome replication, also prevents the establishment of a cellular antiviral state by blocking the interferon-alpha/beta (IFN-alpha/beta) signaling pathway. Mechanistically, interferes with host kinases TBK1 and IKKE upstream of interferon regulatory factor 3/IRF3 to inhibit the RIG-I pathway. Also antagonizes type I interferon signaling by targeting STAT2 for degradation by the proteasome thereby preventing activation of JAK-STAT signaling pathway. Mechanistically, acts as a scaffold protein to connect host ZSWIM8/CUL3 ligase complex and STAT2, leading to STAT2 degradation. Within the host nucleus, disrupts host SUMO1 and STAT2 co-localization with PML, resulting in PML degradation. May also reduce immune responses by preventing the recruitment of the host PAF1 complex to interferon-responsive genes. This is Genome polyprotein from Aedes aegypti (Yellowfever mosquito).